The primary structure comprises 178 residues: Adenine phosphoribosyltransferase (178 aa).

Belongs to the purine/pyrimidine phosphoribosyltransferase family. In terms of assembly, homodimer.

It localises to the cytoplasm. It catalyses the reaction AMP + diphosphate = 5-phospho-alpha-D-ribose 1-diphosphate + adenine. It participates in purine metabolism; AMP biosynthesis via salvage pathway; AMP from adenine: step 1/1. Its function is as follows. Catalyzes a salvage reaction resulting in the formation of AMP, that is energically less costly than de novo synthesis. This is Adenine phosphoribosyltransferase from Streptomyces clavuligerus.